Consider the following 390-residue polypeptide: GTPase Obg (390 aa).

In terms of domain architecture, Obg spans 1-159 (MKFVDEAVIR…RHLRLELLLL (159 aa)). The segment at 22–42 (SFRTEKYVPRGGPDGGDGGDG) is disordered. Gly residues predominate over residues 33-42 (GPDGGDGGDG). Positions 160-333 (ADVGMLGLPN…LTYNLMTTIE (174 aa)) constitute an OBG-type G domain. GTP is bound by residues 166–173 (GLPNAGKS), 191–195 (FTTLI), 213–216 (DIPG), 283–286 (NKVD), and 314–316 (SAL). Residues Ser-173 and Thr-193 each coordinate Mg(2+).

It belongs to the TRAFAC class OBG-HflX-like GTPase superfamily. OBG GTPase family. As to quaternary structure, monomer. Requires Mg(2+) as cofactor.

The protein resides in the cytoplasm. Functionally, an essential GTPase which binds GTP, GDP and possibly (p)ppGpp with moderate affinity, with high nucleotide exchange rates and a fairly low GTP hydrolysis rate. Plays a role in control of the cell cycle, stress response, ribosome biogenesis and in those bacteria that undergo differentiation, in morphogenesis control. The sequence is that of GTPase Obg from Photobacterium profundum (strain SS9).